The following is a 546-amino-acid chain: Glutamate--tRNA ligase (546 aa).

The 'HIGH' region motif lies at 41 to 51 (PSPTGFQHIGG). The 'KMSKS' region motif lies at 293–297 (KLSKR). Residue K296 coordinates ATP.

Belongs to the class-I aminoacyl-tRNA synthetase family. Glutamate--tRNA ligase type 1 subfamily. As to quaternary structure, monomer.

The protein localises to the cytoplasm. The catalysed reaction is tRNA(Glu) + L-glutamate + ATP = L-glutamyl-tRNA(Glu) + AMP + diphosphate. Functionally, catalyzes the attachment of glutamate to tRNA(Glu) in a two-step reaction: glutamate is first activated by ATP to form Glu-AMP and then transferred to the acceptor end of tRNA(Glu). The protein is Glutamate--tRNA ligase of Clostridium perfringens (strain 13 / Type A).